The primary structure comprises 544 residues: High affinity immunoglobulin alpha and immunoglobulin mu Fc receptor (544 aa).

An N-terminal signal peptide occupies residues 1–16 (MPLFLILCLLQGSSFA). Residues 17 to 462 (LPQKRPHPRW…TFPEDESSSR (446 aa)) lie on the Extracellular side of the membrane. In terms of domain architecture, Ig-like V-type spans 61-169 (PNALKGSRLV…NMLFLSMNLT (109 aa)). The segment at 75 to 97 (GGAVTIQCHYAPSSVNRHQRKYW) is mediates immunoglobulin Fc fragment-binding. Cysteine 82 and cysteine 153 are oxidised to a cystine. An N-linked (GlcNAc...) asparagine glycan is attached at asparagine 167. Residues 218 to 325 (DTVASTPGTS…TTKADRPRED (108 aa)) are disordered. 2 stretches are compositionally biased toward polar residues: residues 220 to 232 (VAST…TTAS) and 280 to 291 (ASKSRSMSNTTE). The span at 307 to 325 (ASKDRREITTTKADRPRED) shows a compositional bias: basic and acidic residues. Residues 463–483 (TLAPVSTMLALFMLMALVLLQ) traverse the membrane as a helical segment. Residues 484–544 (RKLRRRRTSQ…LTAPERNPGP (61 aa)) are Cytoplasmic-facing. A disordered region spans residues 511 to 544 (PQPDQLPHVERKMLQDDSLPAGASLTAPERNPGP).

Interacts with IGHM; this interaction facilitates the endocytosis of IgM-coated microbes or IgM-antigen immune complexes. In terms of processing, N-glycosylated.

The protein localises to the cell membrane. Functionally, functions as a receptor for the Fc fragment of IgA and IgM. Binds IgA and IgM with high affinity and mediates their endocytosis. May function in the immune response to microbes mediated by IgA and IgM. The protein is High affinity immunoglobulin alpha and immunoglobulin mu Fc receptor (FCAMR) of Pongo abelii (Sumatran orangutan).